Reading from the N-terminus, the 652-residue chain is DNA ligase (652 aa).

NAD(+) contacts are provided by residues 29–33, 78–79, and glutamate 107; these read DSEYD and SL. Lysine 109 functions as the N6-AMP-lysine intermediate in the catalytic mechanism. NAD(+) contacts are provided by arginine 130, glutamate 164, lysine 278, and lysine 302. Residues cysteine 395, cysteine 398, cysteine 413, and cysteine 418 each coordinate Zn(2+). The 76-residue stretch at 577-652 folds into the BRCT domain; that stretch reads AADAALSGMT…IRDEDWLDSL (76 aa).

This sequence belongs to the NAD-dependent DNA ligase family. LigA subfamily. Mg(2+) serves as cofactor. The cofactor is Mn(2+).

It carries out the reaction NAD(+) + (deoxyribonucleotide)n-3'-hydroxyl + 5'-phospho-(deoxyribonucleotide)m = (deoxyribonucleotide)n+m + AMP + beta-nicotinamide D-nucleotide.. In terms of biological role, DNA ligase that catalyzes the formation of phosphodiester linkages between 5'-phosphoryl and 3'-hydroxyl groups in double-stranded DNA using NAD as a coenzyme and as the energy source for the reaction. It is essential for DNA replication and repair of damaged DNA. The protein is DNA ligase of Streptococcus sanguinis (strain SK36).